The following is a 387-amino-acid chain: Phosphoglycerate kinase (387 aa).

Residues 21 to 23 (DLN), arginine 36, 59 to 62 (HLGR), arginine 113, and arginine 146 each bind substrate. Residues lysine 197, glutamate 314, and 340–343 (GGDT) contribute to the ATP site.

Belongs to the phosphoglycerate kinase family. As to quaternary structure, monomer.

The protein resides in the cytoplasm. The catalysed reaction is (2R)-3-phosphoglycerate + ATP = (2R)-3-phospho-glyceroyl phosphate + ADP. It participates in carbohydrate degradation; glycolysis; pyruvate from D-glyceraldehyde 3-phosphate: step 2/5. The protein is Phosphoglycerate kinase of Pseudomonas fluorescens (strain Pf0-1).